The primary structure comprises 129 residues: Small ribosomal subunit protein uS8my (129 aa).

This sequence belongs to the universal ribosomal protein uS8 family. In terms of assembly, component of the mitochondrial ribosome small subunit.

The protein resides in the mitochondrion. This Arabidopsis thaliana (Mouse-ear cress) protein is Small ribosomal subunit protein uS8my (RPS15AE).